Here is a 294-residue protein sequence, read N- to C-terminus: ATP synthase gamma chain (294 aa).

This sequence belongs to the ATPase gamma chain family. In terms of assembly, F-type ATPases have 2 components, CF(1) - the catalytic core - and CF(0) - the membrane proton channel. CF(1) has five subunits: alpha(3), beta(3), gamma(1), delta(1), epsilon(1). CF(0) has three main subunits: a, b and c.

The protein localises to the cell inner membrane. In terms of biological role, produces ATP from ADP in the presence of a proton gradient across the membrane. The gamma chain is believed to be important in regulating ATPase activity and the flow of protons through the CF(0) complex. This Caulobacter sp. (strain K31) protein is ATP synthase gamma chain.